A 297-amino-acid chain; its full sequence is 4-hydroxy-tetrahydrodipicolinate synthase (297 aa).

Thr-45 is a binding site for pyruvate. Catalysis depends on Tyr-133, which acts as the Proton donor/acceptor. Lys-161 acts as the Schiff-base intermediate with substrate in catalysis. Ile-205 contacts pyruvate.

This sequence belongs to the DapA family. As to quaternary structure, homotetramer; dimer of dimers.

It localises to the cytoplasm. The catalysed reaction is L-aspartate 4-semialdehyde + pyruvate = (2S,4S)-4-hydroxy-2,3,4,5-tetrahydrodipicolinate + H2O + H(+). It functions in the pathway amino-acid biosynthesis; L-lysine biosynthesis via DAP pathway; (S)-tetrahydrodipicolinate from L-aspartate: step 3/4. Catalyzes the condensation of (S)-aspartate-beta-semialdehyde [(S)-ASA] and pyruvate to 4-hydroxy-tetrahydrodipicolinate (HTPA). The polypeptide is 4-hydroxy-tetrahydrodipicolinate synthase (Dichelobacter nodosus (strain VCS1703A)).